A 424-amino-acid polypeptide reads, in one-letter code: CinA-like protein (424 aa).

This sequence belongs to the CinA family.

This is CinA-like protein from Shewanella loihica (strain ATCC BAA-1088 / PV-4).